Consider the following 677-residue polypeptide: Methionine--tRNA ligase (677 aa).

A 'HIGH' region motif is present at residues 15–25 (PYANGSIHLGH). Zn(2+) contacts are provided by cysteine 146, cysteine 149, cysteine 159, and cysteine 162. The 'KMSKS' region motif lies at 333 to 337 (KMSKS). Lysine 336 is an ATP binding site. Positions 575 to 677 (DFAKVDLRVA…AGAKPGHQVK (103 aa)) constitute a tRNA-binding domain.

The protein belongs to the class-I aminoacyl-tRNA synthetase family. MetG type 1 subfamily. Homodimer. Zn(2+) is required as a cofactor.

Its subcellular location is the cytoplasm. The catalysed reaction is tRNA(Met) + L-methionine + ATP = L-methionyl-tRNA(Met) + AMP + diphosphate. In terms of biological role, is required not only for elongation of protein synthesis but also for the initiation of all mRNA translation through initiator tRNA(fMet) aminoacylation. The protein is Methionine--tRNA ligase of Escherichia coli O157:H7.